The chain runs to 500 residues: Cytochrome P450 monooxygenase 103 (500 aa).

2 helical membrane passes run 1-21 (MASTPLLYVLVIILSAVYLLR) and 26-46 (PLYAIPAVGPSLPLLSYIGAL). Asn-374 is a glycosylation site (N-linked (GlcNAc...) asparagine). Heme is bound at residue Cys-441.

It belongs to the cytochrome P450 family. Heme serves as cofactor.

Its subcellular location is the membrane. It functions in the pathway secondary metabolite biosynthesis. Functionally, cytochrome P450 monooxygenase that is able to use testosterone as a substrate for oxidation. The sequence is that of Cytochrome P450 monooxygenase 103 from Postia placenta (strain ATCC 44394 / Madison 698-R) (Brown rot fungus).